The sequence spans 222 residues: MATPQSVFVFAICILMITELILASKSYYDILGVPKSASERQIKKAFHKLAMKYHPDKNKSPDAEAKFREIAEAYETLSDANSRKEYDTIGHSAFTNGKGQRGNGSPFEQSFNFNFDDLFKDFNFFGQNQNTRSKKHFENHFHTRQDGSSRQRHHFQEFSFGGGLFDDMFEDMEKMFSFSGFDTTNRHTVQTENRFHGSSKHCRTVTQRRGNMVTTYTDCSGQ.

A signal peptide spans 1–23; sequence MATPQSVFVFAICILMITELILA. The 65-residue stretch at 26–90 folds into the J domain; sequence SYYDILGVPK…NSRKEYDTIG (65 aa). The segment at 91-222 is divergent targeting domain; sequence HSAFTNGKGQ…VTTYTDCSGQ (132 aa). At serine 133 the chain carries Phosphoserine.

Interacts with HSPA5/BiP; interaction is direct. Interacts with ERN1/IRE1 (via the luminal region). Interacts with DERL1. Post-translationally, not N-glycosylated.

It localises to the endoplasmic reticulum lumen. Its function is as follows. Co-chaperone for Hsp70 protein HSPA5/BiP that acts as a key repressor of the ERN1/IRE1-mediated unfolded protein response (UPR). J domain-containing co-chaperones stimulate the ATPase activity of Hsp70 proteins and are required for efficient substrate recognition by Hsp70 proteins. In the unstressed endoplasmic reticulum, interacts with the luminal region of ERN1/IRE1 and selectively recruits HSPA5/BiP: HSPA5/BiP disrupts the dimerization of the active ERN1/IRE1 luminal region, thereby inactivating ERN1/IRE1. Also involved in endoplasmic reticulum-associated degradation (ERAD) of misfolded proteins. Required for survival of B-cell progenitors and normal antibody production. The sequence is that of DnaJ homolog subfamily B member 9 from Mus musculus (Mouse).